Consider the following 501-residue polypeptide: Ribose import ATP-binding protein RbsA (501 aa).

ABC transporter domains are found at residues 8–245 (LKMV…VGRT) and 255–500 (VKKG…VGIN). An ATP-binding site is contributed by 40 to 47 (GENGAGKS).

Belongs to the ABC transporter superfamily. Ribose importer (TC 3.A.1.2.1) family. As to quaternary structure, the complex is composed of an ATP-binding protein (RbsA), two transmembrane proteins (RbsC) and a solute-binding protein (RbsB).

The protein resides in the cell membrane. The enzyme catalyses D-ribose(out) + ATP + H2O = D-ribose(in) + ADP + phosphate + H(+). In terms of biological role, part of the ABC transporter complex RbsABC involved in ribose import. Responsible for energy coupling to the transport system. In Clostridium perfringens (strain 13 / Type A), this protein is Ribose import ATP-binding protein RbsA.